We begin with the raw amino-acid sequence, 134 residues long: ATP synthase epsilon chain (134 aa).

Belongs to the ATPase epsilon chain family. As to quaternary structure, F-type ATPases have 2 components, CF(1) - the catalytic core - and CF(0) - the membrane proton channel. CF(1) has five subunits: alpha(3), beta(3), gamma(1), delta(1), epsilon(1). CF(0) has three main subunits: a, b and c.

The protein localises to the cellular thylakoid membrane. Its function is as follows. Produces ATP from ADP in the presence of a proton gradient across the membrane. The chain is ATP synthase epsilon chain from Prochlorococcus marinus (strain MIT 9515).